A 188-amino-acid polypeptide reads, in one-letter code: MAERGNDIRPGQVLDHNGALYLVVKTMHTQPGKGGAYIQAELKNLKTGAKYQERFRADGYVNRAIIEEVSFQYIFGDSSSLTLMNTENYEQISIPVELLGDKSVYLQENMILTLLFHKGQVISAKVPDYVVLEVVEAESVIKGQTASSSYKSAVLENGRRVSVPPFIKVGEKIVIYTPDDTYYERAKD.

Belongs to the elongation factor P family.

It is found in the cytoplasm. It functions in the pathway protein biosynthesis; polypeptide chain elongation. In terms of biological role, involved in peptide bond synthesis. Stimulates efficient translation and peptide-bond synthesis on native or reconstituted 70S ribosomes in vitro. Probably functions indirectly by altering the affinity of the ribosome for aminoacyl-tRNA, thus increasing their reactivity as acceptors for peptidyl transferase. The polypeptide is Elongation factor P (Anaplasma phagocytophilum (strain HZ)).